We begin with the raw amino-acid sequence, 863 residues long: Envelope glycoprotein gp160 (863 aa).

The signal sequence occupies residues 1–32; that stretch reads MIVTMKAMEKRNKKLWTLYLAMALITPCLSLR. The Extracellular portion of the chain corresponds to 33 to 684; the sequence is QLYATVYAGV…ITKWLWYIKI (652 aa). C54 and C74 are joined by a disulfide. N-linked (GlcNAc...) asparagine; by host glycans are attached at residues N59 and N88. 5 cysteine pairs are disulfide-bonded: C119-C201, C126-C192, C131-C146, C214-C243, and C224-C235. The interval 131 to 145 is V1; sequence CTNIAGTTNENLMKK. Residues 146-192 are V2; the sequence is CEFNVTTVIKDKKEKKQALFYVSDLMELNETSSTNKTNSKMYTLTNC. 15 N-linked (GlcNAc...) asparagine; by host glycosylation sites follow: N149, N174, N180, N193, N225, N230, N237, N258, N285, N289, N320, N330, N350, N356, and N360. Residues 292-326 form a V3 region; it reads CERPQIDIQEMRIGPMAWYSMGIGGTAGNSSRAAY. Cysteines 292 and 327 form a disulfide. The interval 362 to 372 is CD4-binding loop; the sequence is SSGGDLEVTHL. 2 disulfides stabilise this stretch: C376–C442 and C383–C415. The segment at 383–415 is V4; it reads CNTAKMFNYTFSCNGTTCSVSNVSQGNNGTLPC. 8 N-linked (GlcNAc...) asparagine; by host glycosylation sites follow: N390, N396, N404, N410, N439, N445, N458, and N463. V5 regions lie at residues 458–469 and 460–469; these read NSSNNNVTFRPI and SNNNVTFRPI. The tract at residues 514–534 is fusion peptide; that stretch reads AVGLGMLFLGVLSAAGSTMGA. The interval 576 to 594 is immunosuppression; sequence RQLRARLLALETLLQNQQL. A disulfide bridge links C600 with C606. 3 N-linked (GlcNAc...) asparagine; by host glycosylation sites follow: N613, N619, and N637. A coiled-coil region spans residues 633 to 667; sequence RQISNISSTIYEEIQKAQVQQEQNEKKLLELDEWA. The interval 662–683 is MPER; binding to GalCer; it reads ELDEWASIWNWLDITKWLWYIK. The chain crosses the membrane as a helical span at residues 685–705; sequence AIIIVGALVGVRVIMIVLNIV. Residues 706 to 863 are Cytoplasmic-facing; sequence KNIRQGYQPL…IRQGLERSLL (158 aa). Positions 712–715 match the YXXL motif; contains endocytosis signal motif; it reads YQPL. Positions 862–863 match the Di-leucine internalization motif motif; that stretch reads LL.

This sequence belongs to the HIV-1 env protein family. The mature envelope protein (Env) consists of a homotrimer of non-covalently associated gp120-gp41 heterodimers. The resulting complex protrudes from the virus surface as a spike. There seems to be as few as 10 spikes on the average virion. Interacts with host CD4, CCR5 and CXCR4. Gp120 also interacts with the C-type lectins CD209/DC-SIGN and CLEC4M/DC-SIGNR (collectively referred to as DC-SIGN(R)). Gp120 and gp41 interact with GalCer. Gp120 interacts with host ITGA4/ITGB7 complex; on CD4+ T-cells, this interaction results in rapid activation of integrin ITGAL/LFA-1, which facilitates efficient cell-to-cell spreading of HIV-1. Gp120 interacts with cell-associated heparan sulfate; this interaction increases virus infectivity on permissive cells and may be involved in infection of CD4- cells. As to quaternary structure, the mature envelope protein (Env) consists of a homotrimer of non-covalently associated gp120-gp41 heterodimers. The resulting complex protrudes from the virus surface as a spike. There seems to be as few as 10 spikes on the average virion. Highly glycosylated by host. The high number of glycan on the protein is reffered to as 'glycan shield' because it contributes to hide protein sequence from adaptive immune system. In terms of processing, palmitoylation of the transmembrane protein and of Env polyprotein (prior to its proteolytic cleavage) is essential for their association with host cell membrane lipid rafts. Palmitoylation is therefore required for envelope trafficking to classical lipid rafts, but not for viral replication. Post-translationally, specific enzymatic cleavages in vivo yield mature proteins. Envelope glycoproteins are synthesized as an inactive precursor that is heavily N-glycosylated and processed likely by host cell furin in the Golgi to yield the mature SU and TM proteins. The cleavage site between SU and TM requires the minimal sequence [KR]-X-[KR]-R. About 2 of the 9 disulfide bonds of gp41 are reduced by P4HB/PDI, following binding to CD4 receptor.

It is found in the virion membrane. The protein localises to the host cell membrane. It localises to the host endosome membrane. Oligomerizes in the host endoplasmic reticulum into predominantly trimers. In a second time, gp160 transits in the host Golgi, where glycosylation is completed. The precursor is then proteolytically cleaved in the trans-Golgi and thereby activated by cellular furin or furin-like proteases to produce gp120 and gp41. In terms of biological role, attaches the virus to the host lymphoid cell by binding to the primary receptor CD4. This interaction induces a structural rearrangement creating a high affinity binding site for a chemokine coreceptor like CXCR4 and/or CCR5. Acts as a ligand for CD209/DC-SIGN and CLEC4M/DC-SIGNR, which are respectively found on dendritic cells (DCs), and on endothelial cells of liver sinusoids and lymph node sinuses. These interactions allow capture of viral particles at mucosal surfaces by these cells and subsequent transmission to permissive cells. HIV subverts the migration properties of dendritic cells to gain access to CD4+ T-cells in lymph nodes. Virus transmission to permissive T-cells occurs either in trans (without DCs infection, through viral capture and transmission), or in cis (following DCs productive infection, through the usual CD4-gp120 interaction), thereby inducing a robust infection. In trans infection, bound virions remain infectious over days and it is proposed that they are not degraded, but protected in non-lysosomal acidic organelles within the DCs close to the cell membrane thus contributing to the viral infectious potential during DCs' migration from the periphery to the lymphoid tissues. On arrival at lymphoid tissues, intact virions recycle back to DCs' cell surface allowing virus transmission to CD4+ T-cells. Functionally, acts as a class I viral fusion protein. Under the current model, the protein has at least 3 conformational states: pre-fusion native state, pre-hairpin intermediate state, and post-fusion hairpin state. During fusion of viral and target intracellular membranes, the coiled coil regions (heptad repeats) assume a trimer-of-hairpins structure, positioning the fusion peptide in close proximity to the C-terminal region of the ectodomain. The formation of this structure appears to drive apposition and subsequent fusion of viral and target cell membranes. Complete fusion occurs in host cell endosomes and is dynamin-dependent, however some lipid transfer might occur at the plasma membrane. The virus undergoes clathrin-dependent internalization long before endosomal fusion, thus minimizing the surface exposure of conserved viral epitopes during fusion and reducing the efficacy of inhibitors targeting these epitopes. Membranes fusion leads to delivery of the nucleocapsid into the cytoplasm. This Human immunodeficiency virus type 1 group O (isolate ANT70) (HIV-1) protein is Envelope glycoprotein gp160.